The following is a 183-amino-acid chain: Protein jagunal homolog 1 (183 aa).

Topologically, residues 1–39 are cytoplasmic; it reads MASRAGPRAAGTDGSDFQHRERVAMHYQMSVTLKYEIKK. At S3 the chain carries Phosphoserine. The chain crosses the membrane as a helical span at residues 40 to 60; it reads LIYVHLVIWLLLVAKMSVGHL. The Lumenal portion of the chain corresponds to 61–71; it reads RLLSHDQVAMP. Residues 72–92 traverse the membrane as a helical segment; the sequence is YQWEYPYLLSILPSLLGLLSF. The Cytoplasmic portion of the chain corresponds to 93 to 96; that stretch reads PRNN. A helical transmembrane segment spans residues 97-117; that stretch reads ISYLVLSMISMGLFSIAPLIY. Residues 118–137 lie on the Lumenal side of the membrane; that stretch reads GSMEMFPAAQQLYRHGKAYR. A helical transmembrane segment spans residues 138 to 158; that stretch reads FLFGFSAVSIMYLVLVLAVQV. Residues 159 to 183 lie on the Cytoplasmic side of the membrane; that stretch reads HAWQLYYSKKLLDSWFTSTQEKKHK.

Belongs to the jagunal family. As to quaternary structure, interacts with COPA, COPB2 and COPG2. As to expression, ubiquitously expressed.

The protein resides in the endoplasmic reticulum membrane. Functionally, endoplasmic reticulum transmembrane protein involved in vesicle-mediated transport, which is required for neutrophil function. Required for vesicle-mediated transport; it is however unclear whether it is involved in early secretory pathway or intracellular protein transport. Acts as a regulator of neutrophil function, probably via its role in vesicle-mediated transport: required for defense against fungal pathogens and for granulocyte colony-stimulating factor (GM-CSF) signaling pathway; possibly by regulating glycosylation and/or targeting of proteins contributing to the viability and migration of neutrophils. The sequence is that of Protein jagunal homolog 1 from Homo sapiens (Human).